Consider the following 112-residue polypeptide: Ribonuclease VapC8 (112 aa).

Residues 10 to 109 enclose the PINc domain; it reads LLDTSVFIAR…TDALIAATAE (100 aa). Positions 12 and 101 each coordinate Mg(2+).

It belongs to the PINc/VapC protein family. The cofactor is Mg(2+).

Toxic component of a type II toxin-antitoxin (TA) system. An RNase. The cognate antitoxin is VapB8. The sequence is that of Ribonuclease VapC8 (vapC8) from Mycobacterium tuberculosis (strain CDC 1551 / Oshkosh).